An 89-amino-acid polypeptide reads, in one-letter code: Pigment-dispersing hormone peptides (89 aa).

The first 22 residues, 1-22, serve as a signal peptide directing secretion; that stretch reads MTAMAVSGKLLTALVLSTYILG. An Alanine amide modification is found at Ala86.

The protein belongs to the arthropod PDH family.

It localises to the secreted. Functionally, capable of inducing pigment dispersion in the chromatophores of the fiddler crab Uca pugilator. The protein is Pigment-dispersing hormone peptides of Romalea microptera (Eastern lubber grasshopper).